A 621-amino-acid polypeptide reads, in one-letter code: 1-deoxy-D-xylulose-5-phosphate synthase (621 aa).

Residues histidine 80 and 121–123 (GHS) each bind thiamine diphosphate. Aspartate 152 is a binding site for Mg(2+). Thiamine diphosphate contacts are provided by residues 153-154 (GA), asparagine 181, tyrosine 288, and glutamate 370. Mg(2+) is bound at residue asparagine 181.

The protein belongs to the transketolase family. DXPS subfamily. Homodimer. Requires Mg(2+) as cofactor. Thiamine diphosphate serves as cofactor.

The catalysed reaction is D-glyceraldehyde 3-phosphate + pyruvate + H(+) = 1-deoxy-D-xylulose 5-phosphate + CO2. It participates in metabolic intermediate biosynthesis; 1-deoxy-D-xylulose 5-phosphate biosynthesis; 1-deoxy-D-xylulose 5-phosphate from D-glyceraldehyde 3-phosphate and pyruvate: step 1/1. Functionally, catalyzes the acyloin condensation reaction between C atoms 2 and 3 of pyruvate and glyceraldehyde 3-phosphate to yield 1-deoxy-D-xylulose-5-phosphate (DXP). The protein is 1-deoxy-D-xylulose-5-phosphate synthase of Erwinia tasmaniensis (strain DSM 17950 / CFBP 7177 / CIP 109463 / NCPPB 4357 / Et1/99).